Reading from the N-terminus, the 157-residue chain is uncharacterized protein (157 aa).

A disordered region spans residues 1–157 (MNRGPPLRSR…SFSFLVPSNS (157 aa)). Positions 8-31 (RSRPPSSPPPASAFPGPSPFPSPS) are enriched in pro residues. Positions 62–71 (RTSHPPRCPH) are enriched in basic residues. A compositionally biased stretch (pro residues) spans 76 to 95 (PSAPSPPFTPPHPLPTPTPS). Low complexity-rich tracts occupy residues 96 to 117 (SSPRSPWLSLAPLPTSSASLAS) and 124 to 157 (SFSSPSSPSTSPLSPSSSSFPSSSSFSFLVPSNS).

This is an uncharacterized protein from Vitis vinifera (Grape).